A 349-amino-acid polypeptide reads, in one-letter code: uncharacterized protein (349 aa).

Residues 1–26 (MQSHAGGSRAPLGLLLICLCLPGLFA) form the signal peptide. 2 disordered regions span residues 30–113 (GAPE…QGMA) and 322–349 (YPAG…GITP). The segment covering 39–52 (HSGQPSFTSLLNPG) has biased composition (polar residues). The segment covering 90-101 (NGPPFWGPPPME) has biased composition (pro residues).

As to quaternary structure, binds to numerous extracellular matrix proteins.

It localises to the secreted. It is found in the extracellular space. The protein localises to the extracellular matrix. This is an uncharacterized protein from Mus musculus (Mouse).